A 1201-amino-acid polypeptide reads, in one-letter code: Kinesin-like protein costa (1201 aa).

Positions 4 to 391 constitute a Kinesin motor domain; that stretch reads PIQVAVRIFP…LQFAFKVQCV (388 aa). The interval 23–92 is disordered; sequence SFGPTEPKKD…NGNDSGQKDY (70 aa). Over residues 28 to 56 the composition is skewed to basic and acidic residues; that stretch reads EPKKDAQAVDEGADSKDSEAQVPAAEKDN. A compositionally biased stretch (polar residues) spans 57-75; it reads PSISETDPNGNAEQDSAAD. 175–182 lines the ATP pocket; sequence GQRGQGKS. Disordered regions lie at residues 502 to 536, 565 to 606, and 618 to 639; these read AEEP…PDLD, HPKA…GASL, and ASQQ…ESSS. Residues 510 to 521 show a composition bias toward low complexity; the sequence is SEAANSESPNSD. S599 and S605 each carry phosphoserine. Coiled-coil stretches lie at residues 652–821 and 968–1001; these read AATA…ELVK and TKVI…ERVL.

Belongs to the TRAFAC class myosin-kinesin ATPase superfamily. Kinesin family. KIF27 subfamily. As to quaternary structure, homodimer (Potential). Binds microtubules. Interacts with ci, smo, sgg, CkIalpha and protein kinase A catalytic subunit. Interacts (via kinesin motor domain) with Ubr3. Post-translationally, polyubiquitinated by Ubr3, which leads to proteasomal degradation.

The protein localises to the cytoplasm. The protein resides in the cytoskeleton. In terms of biological role, regulates cubitus interruptus (ci) processing by recruiting multiple kinases to promote its efficient phosphorylation. Scaffolds multiple kinases and ci into proximity to promote its hyperphosphorylation, which then targets it for SCFSlimb/proteasome-mediated processing to generate its repressor form. Hh signaling inhibits ci phosphorylation by interfering with the cos-ci-kinases complex formation. Negatively regulates hh-signaling pathways during various processes, including photoreceptor differentiation. May negatively regulate a hh-signaling pathway which functions in the intestinal immune response to bacterial uracil by activating the Duox-dependent production of reactive oxygen species (ROS). The protein is Kinesin-like protein costa (cos) of Drosophila melanogaster (Fruit fly).